Here is a 305-residue protein sequence, read N- to C-terminus: Phosphoribosylaminoimidazole-succinocarboxamide synthase (305 aa).

Belongs to the SAICAR synthetase family.

The catalysed reaction is 5-amino-1-(5-phospho-D-ribosyl)imidazole-4-carboxylate + L-aspartate + ATP = (2S)-2-[5-amino-1-(5-phospho-beta-D-ribosyl)imidazole-4-carboxamido]succinate + ADP + phosphate + 2 H(+). Its pathway is purine metabolism; IMP biosynthesis via de novo pathway; 5-amino-1-(5-phospho-D-ribosyl)imidazole-4-carboxamide from 5-amino-1-(5-phospho-D-ribosyl)imidazole-4-carboxylate: step 1/2. This Polaromonas naphthalenivorans (strain CJ2) protein is Phosphoribosylaminoimidazole-succinocarboxamide synthase.